The chain runs to 200 residues: Dephospho-CoA kinase (200 aa).

The DPCK domain occupies 4–200; that stretch reads TIGLTGSVAT…TFIERFVKNK (197 aa). 12-17 contacts ATP; sequence ATGKST.

This sequence belongs to the CoaE family.

Its subcellular location is the cytoplasm. The catalysed reaction is 3'-dephospho-CoA + ATP = ADP + CoA + H(+). The protein operates within cofactor biosynthesis; coenzyme A biosynthesis; CoA from (R)-pantothenate: step 5/5. In terms of biological role, catalyzes the phosphorylation of the 3'-hydroxyl group of dephosphocoenzyme A to form coenzyme A. In Listeria monocytogenes serovar 1/2a (strain ATCC BAA-679 / EGD-e), this protein is Dephospho-CoA kinase.